Here is a 494-residue protein sequence, read N- to C-terminus: Glutamyl-tRNA(Gln) amidotransferase subunit A (494 aa).

Residues K79 and S159 each act as charge relay system in the active site. The active-site Acyl-ester intermediate is the S183.

Belongs to the amidase family. GatA subfamily. Heterotrimer of A, B and C subunits.

It catalyses the reaction L-glutamyl-tRNA(Gln) + L-glutamine + ATP + H2O = L-glutaminyl-tRNA(Gln) + L-glutamate + ADP + phosphate + H(+). Its function is as follows. Allows the formation of correctly charged Gln-tRNA(Gln) through the transamidation of misacylated Glu-tRNA(Gln) in organisms which lack glutaminyl-tRNA synthetase. The reaction takes place in the presence of glutamine and ATP through an activated gamma-phospho-Glu-tRNA(Gln). The polypeptide is Glutamyl-tRNA(Gln) amidotransferase subunit A (Bartonella bacilliformis (strain ATCC 35685 / KC583 / Herrer 020/F12,63)).